We begin with the raw amino-acid sequence, 210 residues long: Transcriptional regulator DauR (210 aa).

This sequence belongs to the DauR family.

Functionally, dauR represses the dauBAR operon. The polypeptide is Transcriptional regulator DauR (Pseudomonas aeruginosa (strain ATCC 15692 / DSM 22644 / CIP 104116 / JCM 14847 / LMG 12228 / 1C / PRS 101 / PAO1)).